Consider the following 168-residue polypeptide: Quinol oxidase subunit 2 (168 aa).

The helical transmembrane segment at 9 to 31 (EVWFIVMLVLVLIFFSWNVYYLS) threads the bilayer.

It belongs to the cytochrome c oxidase subunit 2 family.

The protein resides in the cell membrane. It catalyses the reaction 2 a quinol + O2 = 2 a quinone + 2 H2O. The terminal oxidase is the component of the respiratory chain that catalyzes the reduction of oxygen to water. Subunits 1-3 form the functional core of the enzyme complex. Its function is as follows. Subunit 2 transfers the electrons from caldariella quinol to the bimetallic center of the catalytic subunit 1 that is formed by heme A3 and Cu(B). The polypeptide is Quinol oxidase subunit 2 (soxA) (Sulfolobus acidocaldarius (strain ATCC 33909 / DSM 639 / JCM 8929 / NBRC 15157 / NCIMB 11770)).